We begin with the raw amino-acid sequence, 200 residues long: Acyl-homoserine-lactone synthase (200 aa).

It belongs to the autoinducer synthase family.

It catalyses the reaction a fatty acyl-[ACP] + S-adenosyl-L-methionine = an N-acyl-L-homoserine lactone + S-methyl-5'-thioadenosine + holo-[ACP] + H(+). Required for the synthesis of BHL (N-butanoyl-L-homoserine lactone). The sequence is that of Acyl-homoserine-lactone synthase (swrI) from Serratia liquefaciens.